The chain runs to 219 residues: uncharacterized protein (219 aa).

The next 2 helical transmembrane spans lie at 81-101 (VVKW…NYLI) and 168-188 (PIME…TALV).

It localises to the membrane. This is an uncharacterized protein from Saccharomyces cerevisiae (strain ATCC 204508 / S288c) (Baker's yeast).